Here is a 1453-residue protein sequence, read N- to C-terminus: ABC transporter G family member 34 (1453 aa).

The tract at residues 1 to 24 is disordered; sequence MLGRDEDLVRTMSGRGSLGSTSHR. An ABC transporter 1 domain is found at 173–446; it reads LGLFHLLPSK…FEYMGFKCPE (274 aa). Residue 206-213 participates in ATP binding; that stretch reads GPPSSGKT. Residues 524 to 737 enclose the ABC transmembrane type-2 1 domain; the sequence is DLFKACFDRE…GQTALVINEF (214 aa). The next 6 membrane-spanning stretches (helical) occupy residues 542–562, 582–602, 621–641, 661–681, 687–707, and 773–793; these read FVYV…MTVY, LFFS…FTVM, FALP…VIWI, LLAY…LGAL, IANS…GFII, and FWIC…CYII. The ABC transporter 2 domain maps to 852-1105; that stretch reads LAFNNVNYYV…LVEYFEAIEG (254 aa). Residue 897–904 participates in ATP binding; it reads GVSGAGKT. An ABC transmembrane type-2 2 domain is found at 1177–1391; sequence TQTKACFWKM…TLYGIITSQV (215 aa). 7 consecutive transmembrane segments (helical) span residues 1196-1216, 1230-1250, 1289-1309, 1311-1331, 1341-1361, 1366-1386, and 1422-1442; these read YNAI…LLFW, NFFG…AATV, IQTG…WTVV, FFWF…YGMM, IAGI…GFLI, IPIW…LYGI, and FLPV…FAFA.

Belongs to the ABC transporter superfamily. ABCG family. PDR (TC 3.A.1.205) subfamily. As to expression, expressed in roots at low levels.

Its subcellular location is the membrane. In terms of biological role, may be a general defense protein. The sequence is that of ABC transporter G family member 34 (ABCG34) from Arabidopsis thaliana (Mouse-ear cress).